A 374-amino-acid polypeptide reads, in one-letter code: Spore germination protein B3 (374 aa).

Residues 1–19 (MKTASKFSVMFFMLLALCG) form the signal peptide. Cys-20 is lipidated: N-palmitoyl cysteine. A lipid anchor (S-diacylglycerol cysteine) is attached at Cys-20.

This sequence belongs to the GerABKC lipoprotein family.

Its subcellular location is the cell membrane. In terms of biological role, involved in the response to the germinative mixture of L-asparagine, glucose, fructose and potassium ions (AGFK). Cannot stimulate germination in the absence of gerD and gerK gene products (fructose and glucose receptors respectively). The protein is Spore germination protein B3 (gerBC) of Bacillus subtilis (strain 168).